Here is a 217-residue protein sequence, read N- to C-terminus: Protein-L-isoaspartate O-methyltransferase 2 (217 aa).

The active site involves Ser64.

It belongs to the methyltransferase superfamily. L-isoaspartyl/D-aspartyl protein methyltransferase family.

It is found in the cytoplasm. It carries out the reaction [protein]-L-isoaspartate + S-adenosyl-L-methionine = [protein]-L-isoaspartate alpha-methyl ester + S-adenosyl-L-homocysteine. Its function is as follows. Catalyzes the methyl esterification of L-isoaspartyl residues in peptides and proteins that result from spontaneous decomposition of normal L-aspartyl and L-asparaginyl residues. It plays a role in the repair and/or degradation of damaged proteins. The polypeptide is Protein-L-isoaspartate O-methyltransferase 2 (Rhodopseudomonas palustris (strain HaA2)).